The sequence spans 506 residues: Trans-cinnamate 4-monooxygenase (506 aa).

Residues 3-23 (DFVLLEKALLGLFIATIVAIT) form a helical membrane-spanning segment. (E)-cinnamate is bound by residues 214–219 (RSRLAQ) and alanine 307. Residue cysteine 448 coordinates heme.

Belongs to the cytochrome P450 family. Heme serves as cofactor.

The protein localises to the membrane. The enzyme catalyses (E)-cinnamate + reduced [NADPH--hemoprotein reductase] + O2 = (E)-4-coumarate + oxidized [NADPH--hemoprotein reductase] + H2O + H(+). It functions in the pathway phenylpropanoid metabolism; trans-4-coumarate biosynthesis; trans-4-coumarate from trans-cinnamate: step 1/1. Functionally, catalyzes the first oxidative step of the phenylpropanoid pathway in higher plants by transforming trans-cinnamate into p-coumarate. The compounds formed by this pathway are essential components for lignification, pollination, and defense against ultraviolet light, predators and pathogens. This Petroselinum crispum (Parsley) protein is Trans-cinnamate 4-monooxygenase (CYP73A10).